Reading from the N-terminus, the 774-residue chain is Pentatricopeptide repeat-containing protein At4g20770 (774 aa).

20 PPR repeats span residues 5 to 39, 40 to 70, 71 to 101, 102 to 136, 137 to 171, 172 to 203, 204 to 238, 239 to 270, 283 to 313, 314 to 348, 349 to 379, 380 to 414, 415 to 449, 450 to 480, 482 to 516, 518 to 552, 553 to 583, 584 to 618, 619 to 654, and 655 to 685; these read GNKYLASLLRCYRDERCKLSGKVIHGFIVRMGMKS, DTYLCNRLLDLYIECGDGDYARKVFDEMSVR, DVYSWNAFLTFRCKVGDLGEACEVFDGMPER, DVVSWNNMISVLVRKGFEEKALVVYKRMVCDGFLP, SRFTLASVLSACSKVLDGVFGMRCHGVAVKTGLDK, NIFVGNALLSMYAKCGFIVDYGVRVFESLSQP, NEVSYTAVIGGLARENKVLEAVQMFRLMCEKGVQV, DSVCLSNILSISAPREGCDSLSEIYGNELGKQ, DLHLNNSLLEIYAKNKDMNGAELIFAEMPEV, NVVSWNIMIVGFGQEYRSDKSVEFLTRMRDSGFQP, NEVTCISVLGACFRSGDVETGRRIFSSIPQP, SVSAWNAMLSGYSNYEHYEEAISNFRQMQFQNLKP, DKTTLSVILSSCARLRFLEGGKQIHGVVIRTEISK, NSHIVSGLIAVYSECEKMEISECIFDDCINE, DIACWNSMISGFRHNMLDTKALILFRRMHQTAVLC, NETSFATVLSSCSRLCSLLHGRQFHGLVVKSGYVS, DSFVETALTDMYCKCGEIDSARQFFDAVLRK, NTVIWNEMIHGYGHNGRGDEAVGLYRKMISSGEKP, DGITFVSVLTACSHSGLVETGLEILSSMQRIHGIEP, and ELDHYICIVDCLGRAGRLEDAEKLAEATPYK. Residues 690–765 are type E motif; sequence LWEILLSSCR…TPGQSWTTYG (76 aa).

This sequence belongs to the PPR family. PCMP-E subfamily.

This chain is Pentatricopeptide repeat-containing protein At4g20770 (PCMP-E35), found in Arabidopsis thaliana (Mouse-ear cress).